The following is a 103-amino-acid chain: AAFALPAFASFEKDVITPAALEAVLNRKAPLSNIMMENDAILNVIANVKTVISNPVLEEALLKTNHGVNGIPCGESCVWIPCLTSTVGCSCKSKVCYRNSLDN.

The first 9 residues, 1–9 (AAFALPAFA), serve as a signal peptide directing secretion. The propeptide occupies 10–69 (SFEKDVITPAALEAVLNRKAPLSNIMMENDAILNVIANVKTVISNPVLEEALLKTNHGVN). The segment at residues 70 to 99 (GIPCGESCVWIPCLTSTVGCSCKSKVCYRN) is a cross-link (cyclopeptide (Gly-Asn)). Intrachain disulfides connect cysteine 73–cysteine 89, cysteine 77–cysteine 91, and cysteine 82–cysteine 96. Residues 100 to 103 (SLDN) constitute a propeptide that is removed on maturation.

Post-translationally, this is a cyclic peptide.

Probably participates in a plant defense mechanism. The sequence is that of Cyclotide vibi-I from Viola biflora (Yellow wood violet).